Reading from the N-terminus, the 901-residue chain is Protein translocase subunit SecA (901 aa).

Residues glutamine 87, 105-109 (GEGKT), and aspartate 512 contribute to the ATP site. Residues 839 to 901 (QMEEQRRQES…KYKQCHGRLA (63 aa)) form a disordered region. The segment covering 841–850 (EEQRRQESER) has biased composition (basic and acidic residues). The Zn(2+) site is built by cysteine 885, cysteine 887, cysteine 896, and histidine 897. Residues 891–901 (KKYKQCHGRLA) are compositionally biased toward basic residues.

It belongs to the SecA family. Monomer and homodimer. Part of the essential Sec protein translocation apparatus which comprises SecA, SecYEG and auxiliary proteins SecDF-YajC and YidC. It depends on Zn(2+) as a cofactor.

It localises to the cell inner membrane. Its subcellular location is the cytoplasm. The catalysed reaction is ATP + H2O + cellular proteinSide 1 = ADP + phosphate + cellular proteinSide 2.. In terms of biological role, part of the Sec protein translocase complex. Interacts with the SecYEG preprotein conducting channel. Has a central role in coupling the hydrolysis of ATP to the transfer of proteins into and across the cell membrane, serving both as a receptor for the preprotein-SecB complex and as an ATP-driven molecular motor driving the stepwise translocation of polypeptide chains across the membrane. The polypeptide is Protein translocase subunit SecA (Erwinia tasmaniensis (strain DSM 17950 / CFBP 7177 / CIP 109463 / NCPPB 4357 / Et1/99)).